The primary structure comprises 231 residues: Probable transglycosylase SceD (231 aa).

The signal sequence occupies residues 1–27 (MKKTLLASSLAVGLGIVAGNAGHEAHA). Positions 93-153 (SAQAPATNNV…ESKASEGSSV (61 aa)) are disordered. Residues 96–116 (APATNNVAPSADQANQVQSQE) show a composition bias toward polar residues. The span at 119–137 (APQNAQTQQPQASTSNNSQ) shows a compositional bias: low complexity. Positions 138–153 (VTATPTESKASEGSSV) are enriched in polar residues.

Belongs to the transglycosylase family. SceD subfamily.

Its subcellular location is the secreted. In terms of biological role, is able to cleave peptidoglycan and affects clumping and separation of bacterial cells. This is Probable transglycosylase SceD (sceD) from Staphylococcus aureus (strain bovine RF122 / ET3-1).